The sequence spans 547 residues: Aspartate 1-decarboxylase (547 aa).

Lys-338 is subject to N6-(pyridoxal phosphate)lysine.

It belongs to the group II decarboxylase family. Requires pyridoxal 5'-phosphate as cofactor.

The enzyme catalyses L-aspartate + H(+) = beta-alanine + CO2. It functions in the pathway cofactor biosynthesis; (R)-pantothenate biosynthesis; beta-alanine from L-aspartate: step 1/1. Its function is as follows. Catalyzes the pyridoxal-dependent decarboxylation of aspartate to produce beta-alanine. Has weak activity with glutamate. The polypeptide is Aspartate 1-decarboxylase (Aliivibrio fischeri (strain ATCC 700601 / ES114) (Vibrio fischeri)).